Consider the following 114-residue polypeptide: UPF0145 protein Acry_1752 (114 aa).

The protein belongs to the UPF0145 family.

The sequence is that of UPF0145 protein Acry_1752 from Acidiphilium cryptum (strain JF-5).